The primary structure comprises 394 residues: Elongation factor Tu (394 aa).

Residues 10–204 (KEHANIGTIG…AVDDYIPTPE (195 aa)) enclose the tr-type G domain. Positions 19-26 (GHVDHGKT) are G1. 19–26 (GHVDHGKT) serves as a coordination point for GTP. Position 26 (T26) interacts with Mg(2+). The G2 stretch occupies residues 60 to 64 (GITIN). Residues 81-84 (DCPG) form a G3 region. Residues 81–85 (DCPGH) and 136–139 (NKVD) contribute to the GTP site. The G4 stretch occupies residues 136–139 (NKVD). Residues 174 to 176 (SAL) form a G5 region.

The protein belongs to the TRAFAC class translation factor GTPase superfamily. Classic translation factor GTPase family. EF-Tu/EF-1A subfamily. As to quaternary structure, monomer.

Its subcellular location is the cytoplasm. The enzyme catalyses GTP + H2O = GDP + phosphate + H(+). Its function is as follows. GTP hydrolase that promotes the GTP-dependent binding of aminoacyl-tRNA to the A-site of ribosomes during protein biosynthesis. This is Elongation factor Tu from Staphylococcus epidermidis (strain ATCC 35984 / DSM 28319 / BCRC 17069 / CCUG 31568 / BM 3577 / RP62A).